Consider the following 467-residue polypeptide: Glutamate--tRNA ligase (467 aa).

The short motif at 9–19 (PSPTGYLHIGG) is the 'HIGH' region element. The 'KMSKS' region signature appears at 237-241 (KLSKR). K240 is a binding site for ATP.

The protein belongs to the class-I aminoacyl-tRNA synthetase family. Glutamate--tRNA ligase type 1 subfamily. Monomer.

It is found in the cytoplasm. The enzyme catalyses tRNA(Glu) + L-glutamate + ATP = L-glutamyl-tRNA(Glu) + AMP + diphosphate. In terms of biological role, catalyzes the attachment of glutamate to tRNA(Glu) in a two-step reaction: glutamate is first activated by ATP to form Glu-AMP and then transferred to the acceptor end of tRNA(Glu). The protein is Glutamate--tRNA ligase of Xanthomonas oryzae pv. oryzae (strain MAFF 311018).